A 164-amino-acid polypeptide reads, in one-letter code: MNPIHFDLTLVVQVLSFLLLVYILRRFAWNPLINMMEERRSQIEANIANAEKERLQAEQIKREYQEEMRKARQEAQEVIAKATKLSEQRAAEILAAAHGEAEKIKQSALADIERERDRAIAQVQAQVADLSVAVAEKIIRKNLDVRGQEDMIEQFIQEVGELPC.

Residues 4-24 form a helical membrane-spanning segment; the sequence is IHFDLTLVVQVLSFLLLVYIL.

It belongs to the ATPase B chain family. F-type ATPases have 2 components, F(1) - the catalytic core - and F(0) - the membrane proton channel. F(1) has five subunits: alpha(3), beta(3), gamma(1), delta(1), epsilon(1). F(0) has three main subunits: a(1), b(2) and c(10-14). The alpha and beta chains form an alternating ring which encloses part of the gamma chain. F(1) is attached to F(0) by a central stalk formed by the gamma and epsilon chains, while a peripheral stalk is formed by the delta and b chains.

The protein localises to the cell membrane. F(1)F(0) ATP synthase produces ATP from ADP in the presence of a proton or sodium gradient. F-type ATPases consist of two structural domains, F(1) containing the extramembraneous catalytic core and F(0) containing the membrane proton channel, linked together by a central stalk and a peripheral stalk. During catalysis, ATP synthesis in the catalytic domain of F(1) is coupled via a rotary mechanism of the central stalk subunits to proton translocation. In terms of biological role, component of the F(0) channel, it forms part of the peripheral stalk, linking F(1) to F(0). The sequence is that of ATP synthase subunit b from Desulfitobacterium hafniense (strain Y51).